The following is a 306-amino-acid chain: Manganese transport system membrane protein MntB (306 aa).

Over 1–25 (MNQLVVAFPFWHWLVEPLQYEFLIR) the chain is Periplasmic. The chain crosses the membrane as a helical span at residues 26 to 46 (AIWVSAFVGLVCAVLSCYITL). The Cytoplasmic portion of the chain corresponds to 47 to 48 (KG). A helical membrane pass occupies residues 49–69 (WSLMGDAISHAVVPGVVLAYA). Residues 70–71 (LN) are Periplasmic-facing. A helical transmembrane segment spans residues 72 to 92 (IPFAIGAFTFGFGATVAIGYV). At 93–101 (KSKTRLKED) the chain is on the cytoplasmic side. Residues 102 to 122 (AVIGIVFTGFFALGLVLVTKI) form a helical membrane-spanning segment. Topologically, residues 123-141 (PSNVDLFHILFGNVLGISQ) are periplasmic. A helical transmembrane segment spans residues 142–162 (QDIIQTLIAGSITLIVILLRR). Residues 163 to 179 (KDLLLFCFDPNHAKAIG) lie on the Cytoplasmic side of the membrane. The helical transmembrane segment at 180–200 (LRTQVMYYTLLSVLALTIVAA) threads the bilayer. The Periplasmic segment spans residues 201–202 (LQ). The chain crosses the membrane as a helical span at residues 203–223 (TAGIILVISMLVTPGSIGYLL). At 224 to 228 (SDRFD) the chain is on the cytoplasmic side. Residues 229 to 249 (HMLWYSVVSSVLSCVLGTYLS) form a helical membrane-spanning segment. Residues 250–255 (YHFDVS) lie on the Periplasmic side of the membrane. Residues 256–276 (TGGMIVVILTTLFVIAMIGAP) form a helical membrane-spanning segment. At 277-306 (KYGILAQEWRKRSGPNPEDDENQTVVVDQV) the chain is on the cytoplasmic side.

Belongs to the ABC-3 integral membrane protein family.

The protein resides in the cell membrane. Functionally, part of an ATP-driven transport system for manganese. The chain is Manganese transport system membrane protein MntB (mntB) from Synechocystis sp. (strain ATCC 27184 / PCC 6803 / Kazusa).